A 468-amino-acid polypeptide reads, in one-letter code: Na(+)/H(+) antiporter NhaA (468 aa).

The next 10 helical transmembrane spans lie at 32-52 (FLHIEAVSGIVLLAAAGIALL), 83-103 (LHFWINDALMTIFFLVVGMEI), 119-139 (ALPMAAALGGVIVPALIYLAI), 148-168 (GWAVPTATDIAFAVGVLALLG), 178-198 (FLLALAIIDDIVAVLIIAVAF), 205-225 (GGFLVAGTGILMVLGLQWIGV), 320-340 (ALHPWVAYLVMPLFALANAGV), 354-374 (GAMFGVVLALVVGKPLGIVSV), 397-417 (LVGLLAGIGFTMSIFIATLAF), and 428-448 (LGVLLASAIAATIGLTWGFIY).

Belongs to the NhaA Na(+)/H(+) (TC 2.A.33) antiporter family.

It localises to the cell inner membrane. It catalyses the reaction Na(+)(in) + 2 H(+)(out) = Na(+)(out) + 2 H(+)(in). Na(+)/H(+) antiporter that extrudes sodium in exchange for external protons. This is Na(+)/H(+) antiporter NhaA from Cupriavidus necator (strain ATCC 17699 / DSM 428 / KCTC 22496 / NCIMB 10442 / H16 / Stanier 337) (Ralstonia eutropha).